Here is a 175-residue protein sequence, read N- to C-terminus: uncharacterized protein (175 aa).

The chain crosses the membrane as a helical span at residues 143 to 166; it reads TCFLFCAFVTSIFIETDYSIFFLL.

Its subcellular location is the membrane. This is an uncharacterized protein from Saccharomyces cerevisiae (strain ATCC 204508 / S288c) (Baker's yeast).